The sequence spans 360 residues: Tyrosine-protein phosphatase non-receptor type 7 (360 aa).

Residues 1-37 (MVQAHGGRSRAQPLTLSLGAAMTQPPPEKTPAKKHVR) are disordered. Residues 38-51 (LQERRGSNVALMLD) are interaction with MAP kinases. The residue at position 44 (serine 44) is a Phosphoserine. The residue at position 66 (threonine 66) is a Phosphothreonine. Serine 93, serine 110, and serine 143 each carry phosphoserine. In terms of domain architecture, Tyrosine-protein phosphatase spans 97–350 (LEEEFLKIPS…QFLHHTLALY (254 aa)). Residues aspartate 257, 291–297 (CSAGIGR), and glutamine 335 each bind substrate. The active-site Phosphocysteine intermediate is cysteine 291. Cysteine 291 is subject to Cysteine sulfenic acid (-SOH).

This sequence belongs to the protein-tyrosine phosphatase family. Non-receptor class subfamily. Monomer. Interacts with MAPK1, MAPK3 and several other MAP kinases. In terms of processing, phosphorylated on serine residues in resting T-cells. Phosphorylation increases upon exposure to stimuli that increase intracellular cAMP levels. Phosphorylation leads to dissociation of bound MAP kinases. Oxidized at active site cysteine. Treatment with pervanadate (vanadate and H(2)O(2)) or with antigen enhanced oxidation of active site cysteine. As to expression, expressed exclusively in thymus and spleen.

The protein localises to the cytoplasm. The protein resides in the cytoskeleton. The enzyme catalyses O-phospho-L-tyrosyl-[protein] + H2O = L-tyrosyl-[protein] + phosphate. Inhibited in cells after FCER1A triggering. In terms of biological role, protein phosphatase that acts preferentially on tyrosine-phosphorylated MAPK1. Plays a role in the regulation of T and B-lymphocyte development and signal transduction. This is Tyrosine-protein phosphatase non-receptor type 7 (PTPN7) from Homo sapiens (Human).